The following is an 83-amino-acid chain: U5-theraphotoxin-Hs1d (83 aa).

Residues 1–21 form the signal peptide; the sequence is MKTSMFLTLTGLVLLFVVCYA. Residues 22–49 constitute a propeptide that is removed on maturation; that stretch reads SESEEKEFPKELLSSIFAADSDFKVEER. Intrachain disulfides connect C51–C63, C56–C68, and C62–C75.

The protein belongs to the neurotoxin 10 (Hwtx-1) family. 51 (Hntx-8) subfamily. Hntx-8 sub-subfamily. Expressed by the venom gland.

It localises to the secreted. In terms of biological role, agglutinates erythrocytes. The polypeptide is U5-theraphotoxin-Hs1d (Cyriopagopus schmidti (Chinese bird spider)).